A 185-amino-acid chain; its full sequence is Large ribosomal subunit protein uL5 (185 aa).

It belongs to the universal ribosomal protein uL5 family. Part of the 50S ribosomal subunit; part of the 5S rRNA/L5/L18/L25 subcomplex. Contacts the 5S rRNA and the P site tRNA. Forms a bridge to the 30S subunit in the 70S ribosome.

This is one of the proteins that bind and probably mediate the attachment of the 5S RNA into the large ribosomal subunit, where it forms part of the central protuberance. In the 70S ribosome it contacts protein S13 of the 30S subunit (bridge B1b), connecting the 2 subunits; this bridge is implicated in subunit movement. Contacts the P site tRNA; the 5S rRNA and some of its associated proteins might help stabilize positioning of ribosome-bound tRNAs. The protein is Large ribosomal subunit protein uL5 of Rhodopseudomonas palustris (strain BisA53).